Here is a 176-residue protein sequence, read N- to C-terminus: ATP-dependent protease subunit HslV (176 aa).

Residue threonine 5 is part of the active site. 3 residues coordinate Na(+): serine 161, cysteine 164, and threonine 167.

It belongs to the peptidase T1B family. HslV subfamily. As to quaternary structure, a double ring-shaped homohexamer of HslV is capped on each side by a ring-shaped HslU homohexamer. The assembly of the HslU/HslV complex is dependent on binding of ATP.

It localises to the cytoplasm. The catalysed reaction is ATP-dependent cleavage of peptide bonds with broad specificity.. Its activity is regulated as follows. Allosterically activated by HslU binding. Its function is as follows. Protease subunit of a proteasome-like degradation complex believed to be a general protein degrading machinery. In Desulfitobacterium hafniense (strain Y51), this protein is ATP-dependent protease subunit HslV.